Here is a 448-residue protein sequence, read N- to C-terminus: Deoxyguanosinetriphosphate triphosphohydrolase-like protein (448 aa).

One can recognise an HD domain in the interval 67-260 (RLTHSLEVSQ…MELADDIAYG (194 aa)).

The protein belongs to the dGTPase family. Type 2 subfamily.

This chain is Deoxyguanosinetriphosphate triphosphohydrolase-like protein, found in Aliivibrio fischeri (strain ATCC 700601 / ES114) (Vibrio fischeri).